The sequence spans 447 residues: Phosphoglucosamine mutase (447 aa).

Ser-106 acts as the Phosphoserine intermediate in catalysis. Positions 106, 245, 247, and 249 each coordinate Mg(2+). Ser-106 is subject to Phosphoserine.

It belongs to the phosphohexose mutase family. The cofactor is Mg(2+). In terms of processing, activated by phosphorylation.

The catalysed reaction is alpha-D-glucosamine 1-phosphate = D-glucosamine 6-phosphate. Catalyzes the conversion of glucosamine-6-phosphate to glucosamine-1-phosphate. The protein is Phosphoglucosamine mutase of Cupriavidus taiwanensis (strain DSM 17343 / BCRC 17206 / CCUG 44338 / CIP 107171 / LMG 19424 / R1) (Ralstonia taiwanensis (strain LMG 19424)).